Here is a 232-residue protein sequence, read N- to C-terminus: Ornithine carbamoyltransferase (232 aa).

Carbamoyl phosphate is bound by residues Q15, R39, and 66–69 (HPTQ). Residues N99, D163, and 167–168 (SM) each bind L-ornithine. Carbamoyl phosphate contacts are provided by residues 204-207 (HCLP) and T232.

It belongs to the aspartate/ornithine carbamoyltransferase superfamily. OTCase family.

The protein localises to the cytoplasm. The catalysed reaction is carbamoyl phosphate + L-ornithine = L-citrulline + phosphate + H(+). Its pathway is amino-acid biosynthesis; L-arginine biosynthesis; L-arginine from L-ornithine and carbamoyl phosphate: step 1/3. In terms of biological role, reversibly catalyzes the transfer of the carbamoyl group from carbamoyl phosphate (CP) to the N(epsilon) atom of ornithine (ORN) to produce L-citrulline. This chain is Ornithine carbamoyltransferase (argF), found in Neisseria pharyngis.